The primary structure comprises 691 residues: Elongation factor G (691 aa).

One can recognise a tr-type G domain in the interval 8–283 (KRVRNIGIAA…AVVAYLPAPD (276 aa)). GTP contacts are provided by residues 17–24 (AHIDAGKT), 81–85 (DTPGH), and 135–138 (NKMD).

It belongs to the TRAFAC class translation factor GTPase superfamily. Classic translation factor GTPase family. EF-G/EF-2 subfamily.

Its subcellular location is the cytoplasm. In terms of biological role, catalyzes the GTP-dependent ribosomal translocation step during translation elongation. During this step, the ribosome changes from the pre-translocational (PRE) to the post-translocational (POST) state as the newly formed A-site-bound peptidyl-tRNA and P-site-bound deacylated tRNA move to the P and E sites, respectively. Catalyzes the coordinated movement of the two tRNA molecules, the mRNA and conformational changes in the ribosome. The polypeptide is Elongation factor G (Campylobacter lari (strain RM2100 / D67 / ATCC BAA-1060)).